The following is a 40-amino-acid chain: Beta-defensin 2 (40 aa).

3 disulfides stabilise this stretch: cysteine 7–cysteine 36, cysteine 14–cysteine 29, and cysteine 19–cysteine 37.

Belongs to the beta-defensin family. Neutrophilic granules.

It localises to the secreted. In terms of biological role, has bactericidal activity. Active against E.coli ML35 and S.aureus 502A. This is Beta-defensin 2 (DEFB2) from Bos taurus (Bovine).